Consider the following 66-residue polypeptide: Transmembrane protein B66L (66 aa).

The N-terminal stretch at 1-20 is a signal peptide; it reads MDIKRALILFLLFLVVLSNA. The Extracellular segment spans residues 21–40; sequence FVDYIISNFNHAVTCRKPTY. The helical transmembrane segment at 41–61 threads the bilayer; the sequence is FGIVLQGIFLVILFSIVDYLI. Residues 62-66 lie on the Cytoplasmic side of the membrane; sequence NENIL.

This sequence belongs to the asfivirus B66L family.

The protein localises to the host membrane. This chain is Transmembrane protein B66L, found in Ornithodoros (relapsing fever ticks).